Consider the following 56-residue polypeptide: Large ribosomal subunit protein bL33 (56 aa).

This sequence belongs to the bacterial ribosomal protein bL33 family.

This chain is Large ribosomal subunit protein bL33, found in Rickettsia typhi (strain ATCC VR-144 / Wilmington).